A 332-amino-acid chain; its full sequence is CMRF35-like molecule 9 (332 aa).

Positions 1–18 (MRLLVLLWGCLLLPGYEA) are cleaved as a signal peptide. The Ig-like V-type domain occupies 19 to 121 (LEGPEEISGF…RGPDESLLIS (103 aa)). Residues 19–247 (LEGPEEISGF…KPRVSIPMVR (229 aa)) lie on the Extracellular side of the membrane. A disulfide bond links Cys-37 and Cys-107. Asn-96 carries N-linked (GlcNAc...) asparagine glycosylation. 10 O-linked (GalNAc...) threonine glycosylation sites follow: Thr-137, Thr-143, Thr-144, Thr-155, Thr-161, Thr-170, Thr-171, Thr-177, Thr-187, and Thr-195. A disordered region spans residues 146-239 (LQPKAKAQQT…PALSSGSSKP (94 aa)). The span at 147–158 (QPKAKAQQTQPP) shows a compositional bias: low complexity. Low complexity predominate over residues 168-181 (AATTAKQGKTGAEA). Positions 186–205 (GTSQYGHERTSQYTGTSPHP) are enriched in polar residues. O-linked (GalNAc...) serine glycosylation is present at Ser-196. O-linked (GalNAc...) threonine glycosylation is found at Thr-199 and Thr-201. A glycan (O-linked (GalNAc...) serine) is linked at Ser-202. A glycan (O-linked (GalNAc...) threonine) is linked at Thr-207. 4 O-linked (GalNAc...) serine glycosylation sites follow: Ser-208, Ser-213, Ser-214, and Ser-222. Residues 220–239 (LDSTSAEDTSPALSSGSSKP) show a composition bias toward polar residues. An O-linked (GalNAc...) threonine glycan is attached at Thr-223. An O-linked (GalNAc...) serine glycan is attached at Ser-224. Thr-228 carries O-linked (GalNAc...) threonine glycosylation. Ser-229 and Ser-237 each carry an O-linked (GalNAc...) serine glycan. Residues 248–268 (ILAPVLVLLSLLSAAGLIAFC) traverse the membrane as a helical segment. The Cytoplasmic portion of the chain corresponds to 269–332 (SHLLLWRKEA…ELGFSKFVSA (64 aa)).

The protein belongs to the CD300 family. In terms of processing, O-glycosylated with sialylated oligosaccharides. In terms of tissue distribution, highly expressed in heart, skeletal muscle and placenta.

The protein localises to the apical cell membrane. The protein resides in the basolateral cell membrane. It is found in the endosome. It localises to the multivesicular body membrane. Functionally, receptor which may mediate L-selectin-dependent lymphocyte rollings. Binds SELL in a calcium dependent manner. Binds lymphocyte. The polypeptide is CMRF35-like molecule 9 (CD300LG) (Homo sapiens (Human)).